Here is an 81-residue protein sequence, read N- to C-terminus: Small ribosomal subunit protein bS16 (81 aa).

It belongs to the bacterial ribosomal protein bS16 family.

This is Small ribosomal subunit protein bS16 from Caldicellulosiruptor bescii (strain ATCC BAA-1888 / DSM 6725 / KCTC 15123 / Z-1320) (Anaerocellum thermophilum).